A 72-amino-acid polypeptide reads, in one-letter code: Disintegrin sasaimin (72 aa).

Residues 1–72 (EAGEECDCGA…SAGCPRNPFH (72 aa)) enclose the Disintegrin domain. Intrachain disulfides connect Cys-6–Cys-21, Cys-8–Cys-16, Cys-15–Cys-38, Cys-29–Cys-35, Cys-34–Cys-59, and Cys-47–Cys-66. The short motif at 51-53 (RGD) is the Cell attachment site element.

Belongs to the venom metalloproteinase (M12B) family. P-II subfamily. P-IIa sub-subfamily. In terms of assembly, monomer. Expressed by the venom gland.

It localises to the secreted. Inhibits ADP- (IC(50)=66 nM) and collagen-induced (IC(50)=100 nM) aggregation of human platelets. In vitro, inhibits adhesion of endothelial cells to vitronectin, type-I collagen and, to a lower degree, fibronectin and laminin. The chain is Disintegrin sasaimin from Cerrophidion sasai (Costa Rica montane pitviper).